Reading from the N-terminus, the 257-residue chain is uncharacterized protein (257 aa).

Residues serine 122 and histidine 236 each act as charge relay system in the active site.

The protein belongs to the peptidase S9B family.

This is an uncharacterized protein from Bacillus subtilis (strain 168).